Reading from the N-terminus, the 116-residue chain is Peptidyl-tRNA hydrolase (116 aa).

Belongs to the PTH2 family.

The protein resides in the cytoplasm. It catalyses the reaction an N-acyl-L-alpha-aminoacyl-tRNA + H2O = an N-acyl-L-amino acid + a tRNA + H(+). Its function is as follows. The natural substrate for this enzyme may be peptidyl-tRNAs which drop off the ribosome during protein synthesis. The protein is Peptidyl-tRNA hydrolase of Methanococcus maripaludis (strain C7 / ATCC BAA-1331).